Reading from the N-terminus, the 709-residue chain is DCC-interacting protein 13-alpha (709 aa).

A required for RAB5A binding region spans residues methionine 1 to serine 428. The BAR domain occupies glycine 3–proline 268. Positions serine 215–aspartate 259 form a coiled coil. Residues leucine 277–lysine 375 form the PH domain. Disordered stretches follow at residues alanine 397 to glutamate 434, glycine 467 to serine 491, and valine 645 to alanine 709. Threonine 399 bears the Phosphothreonine mark. Position 401 is a phosphoserine (serine 401). The short motif at serine 403–alanine 414 is the F&amp;H element. Serine 410 carries the post-translational modification Phosphoserine; by PKA. In terms of domain architecture, PID spans serine 496–glutamine 656. A coiled-coil region spans residues leucine 621–serine 673. The span at valine 645–serine 667 shows a compositional bias: basic and acidic residues. The segment covering serine 674–serine 693 has biased composition (polar residues). 2 positions are modified to phosphoserine: serine 693 and serine 696. Basic and acidic residues predominate over residues glutamate 700–alanine 709.

In terms of assembly, homodimer. Binds RAB5A/Rab5 through an N-terminal domain. This interaction is essential for its recruitment to endosomal membranes as well as its role in cell proliferation. Binds DCC and the catalytic domain of the inactive form of AKT2 through its PID domain. Binds PIK3CA and subunits of the NuRD/MeCP1 complex. Interacts with OCRL and INPP5B. Interacts with NTRK2. Interacts with APPL2; interaction is independent of follicle stimulating hormone stimulation; interaction is decreased by adiponectin in a time-dependent manner. Forms a complex with APPL2 and RUVBL2. Forms a complex comprising APPL2, RUVBL2, CTNNB1, HDAC1 and HDAC2; interaction reduces interaction between CTNNB1, HDAC1, HDAC2 and RUVBL2 leading to the decrease of deacetylase activity of this complex; affects the recruitment of repressive complexes to the Wnt target genes. Interacts with ANXA2. Interacts with TGFBR1; interaction is TGF beta dependent; mediates trafficking of the TGFBR1 from the endosomes to the nucleus via microtubules in a TRAF6-dependent manner. Interacts with PRKCZ. Interacts with PIK3R1 and APPL2. Interacts with ADIPOR1; ADIPOQ enhances this interaction; inhibites adiponectin-stimulated binding of APPL2 to ADIPOR1. In terms of processing, phosphorylation at Ser-410 by PKA severely impairs binding to OCRL. As to expression, high levels in heart, ovary, pancreas and skeletal muscle.

It localises to the early endosome membrane. It is found in the nucleus. The protein localises to the cytoplasm. The protein resides in the endosome. Its subcellular location is the cell projection. It localises to the ruffle. It is found in the cytoplasmic vesicle. The protein localises to the phagosome. Multifunctional adapter protein that binds to various membrane receptors, nuclear factors and signaling proteins to regulate many processes, such as cell proliferation, immune response, endosomal trafficking and cell metabolism. Regulates signaling pathway leading to cell proliferation through interaction with RAB5A and subunits of the NuRD/MeCP1 complex. Functions as a positive regulator of innate immune response via activation of AKT1 signaling pathway by forming a complex with APPL1 and PIK3R1. Inhibits Fc-gamma receptor-mediated phagocytosis through PI3K/Akt signaling in macrophages. Regulates TLR4 signaling in activated macrophages. Involved in trafficking of the TGFBR1 from the endosomes to the nucleus via microtubules in a TRAF6-dependent manner. Plays a role in cell metabolism by regulating adiponecting and insulin signaling pathways. Required for fibroblast migration through HGF cell signaling. Positive regulator of beta-catenin/TCF-dependent transcription through direct interaction with RUVBL2/reptin resulting in the relief of RUVBL2-mediated repression of beta-catenin/TCF target genes by modulating the interactions within the beta-catenin-reptin-HDAC complex. In Homo sapiens (Human), this protein is DCC-interacting protein 13-alpha.